Here is a 577-residue protein sequence, read N- to C-terminus: Autophagy-related protein 20 (577 aa).

Residues 57 to 81 (GQSYVAPHSGGGRTSSGSSSSASLQ) form a disordered region. The 145-residue stretch at 95 to 239 (GEQGRVRILE…DFLDPNNANW (145 aa)) folds into the PX domain. A 1,2-diacyl-sn-glycero-3-phospho-(1D-myo-inositol-3-phosphate) is bound by residues R131, S133, K157, and R205.

It belongs to the sorting nexin family.

The protein resides in the endosome membrane. The protein localises to the preautophagosomal structure membrane. In terms of biological role, required for cytoplasm to vacuole transport (Cvt), pexophagy and mitophagy. Also involved in endoplasmic reticulum-specific autophagic process and is essential for the survival of cells subjected to severe ER stress. Functions in protein retrieval from the endocytic pathway. This is Autophagy-related protein 20 (ATG20) from Eremothecium gossypii (strain ATCC 10895 / CBS 109.51 / FGSC 9923 / NRRL Y-1056) (Yeast).